Reading from the N-terminus, the 177-residue chain is Coatomer subunit zeta-1 (177 aa).

Met1 bears the N-acetylmethionine mark.

It belongs to the adaptor complexes small subunit family. In terms of assembly, oligomeric complex that consists of at least the alpha, beta, beta', gamma, delta, epsilon and zeta subunits.

The protein resides in the cytoplasm. It is found in the golgi apparatus membrane. It localises to the cytoplasmic vesicle. The protein localises to the COPI-coated vesicle membrane. The coatomer is a cytosolic protein complex that binds to dilysine motifs and reversibly associates with Golgi non-clathrin-coated vesicles, which further mediate biosynthetic protein transport from the ER, via the Golgi up to the trans Golgi network. Coatomer complex is required for budding from Golgi membranes, and is essential for the retrograde Golgi-to-ER transport of dilysine-tagged proteins. The zeta subunit may be involved in regulating the coat assembly and, hence, the rate of biosynthetic protein transport due to its association-dissociation properties with the coatomer complex. This is Coatomer subunit zeta-1 (COPZ1) from Bos taurus (Bovine).